We begin with the raw amino-acid sequence, 192 residues long: Large ribosomal subunit protein uL24c (192 aa).

The N-terminal 47 residues, 1–47 (MAAMAALQSSFTSLSLSSNSFLGQRLFPSPTTLQVKTEGHSPCLIVM), are a transit peptide targeting the chloroplast.

As to quaternary structure, component of the chloroplast large ribosomal subunit (LSU). Mature 70S chloroplast ribosomes of higher plants consist of a small (30S) and a large (50S) subunit. The 30S small subunit contains 1 molecule of ribosomal RNA (16S rRNA) and 24 different proteins. The 50S large subunit contains 3 rRNA molecules (23S, 5S and 4.5S rRNA) and 33 different proteins.

It localises to the plastid. The protein localises to the chloroplast. Its function is as follows. Component of the chloroplast ribosome (chloro-ribosome), a dedicated translation machinery responsible for the synthesis of chloroplast genome-encoded proteins, including proteins of the transcription and translation machinery and components of the photosynthetic apparatus. This is Large ribosomal subunit protein uL24c (RPL24) from Spinacia oleracea (Spinach).